The sequence spans 914 residues: Solute carrier family 12 member 9 (914 aa).

The Cytoplasmic portion of the chain corresponds to 1 to 36; the sequence is MASENSPLLAYRLLGEEGAAFPPNGAGGSGVASARK. S6 carries the phosphoserine modification. A helical transmembrane segment spans residues 37-57; the sequence is LSTFLGVVVPTVLSMFSIVVF. Topologically, residues 58–72 are extracellular; it reads LRIGFVVGHAGLLQA. A helical transmembrane segment spans residues 73 to 93; the sequence is LAMLLVAYVILALTVLSVCAI. The Cytoplasmic portion of the chain corresponds to 94 to 119; sequence ATNGAVRGGGAYFMISRTLGPEVGGS. The chain crosses the membrane as a helical span at residues 120 to 140; sequence IGLMFYLANVCGCAVSLLGLV. The Extracellular segment spans residues 141–167; that stretch reads ESILDVFGADVTGSSGIKVLPQGYGWN. A helical membrane pass occupies residues 168–188; the sequence is LLYGSLLLGLVGGVCALGAGL. The Cytoplasmic segment spans residues 189–193; that stretch reads YARAS. Residues 194–214 form a helical membrane-spanning segment; it reads FLTFLLVSGSLASVLVSFVAV. The Extracellular portion of the chain corresponds to 215-262; the sequence is GPRNITLAPRPGTNGSSVPPRHGHFTGFNGSTLKDNLGAGYAEDYTTG. Residues N218, N228, and N243 are each glycosylated (N-linked (GlcNAc...) asparagine). The helical transmembrane segment at 263-283 threads the bilayer; that stretch reads AMMTFASVFAVLFNGCTGIMA. Topologically, residues 284-297 are cytoplasmic; sequence GANMSGELKDPSRA. Residues 298-318 form a helical membrane-spanning segment; that stretch reads IPLGTIIAVAYTFFIYILLFF. The Extracellular portion of the chain corresponds to 319–338; sequence LSSFTCDRALLQGDYGFFRD. A helical membrane pass occupies residues 339-359; sequence ISLWPPLVLIGIYATALSASM. Residues 360 to 376 are Cytoplasmic-facing; that stretch reads SSLIGASRILHALAQDD. The chain crosses the membrane as a helical span at residues 377–399; it reads LFGVILAPAKVVSGGGNPWGAVL. Topologically, residues 400 to 416 are extracellular; that stretch reads YSWGLVQLVLLAGKLNT. A helical transmembrane segment spans residues 417–437; it reads LAAVVTVFYLVAYAAVDLSCL. The Cytoplasmic portion of the chain corresponds to 438-466; it reads SLEWASAPNFRPTFSLFSWHTCLLGVASC. Residues 467 to 487 traverse the membrane as a helical segment; sequence LLMMFLISPGAAGGSLLLMGL. The Extracellular portion of the chain corresponds to 488–740; it reads LSALLTARGG…LLRPRGGPGY (253 aa). The interval 645–678 is disordered; that stretch reads PAFSEPAEGTREGGSPALSTLFPPPRAPGSPRAL. The chain crosses the membrane as a helical span at residues 741–761; the sequence is VDVCGLFLLQMATILSMVPAW. The Cytoplasmic portion of the chain corresponds to 762-914; the sequence is HSARLRIFLC…GVTPVTCTDL (153 aa). The tract at residues 843 to 864 is disordered; that stretch reads QQGRGTGGGPGGPEGRDGEEGP. Positions 846-855 are enriched in gly residues; it reads RGTGGGPGGP.

It belongs to the SLC12A transporter family. Interacts with SLC12A1.

Its subcellular location is the cell membrane. The protein localises to the lysosome membrane. Its function is as follows. May be an inhibitor of SLC12A1. Seems to correspond to a subunit of a multimeric transport system and thus, additional subunits may be required for its function. May play a role in lysosomal ion flux and osmoregulation. The protein is Solute carrier family 12 member 9 (Slc12a9) of Rattus norvegicus (Rat).